The chain runs to 241 residues: MTESLLYSGKAKNMFQTDDPEIVHIHYKDQATALNGKVKEKIEGKGQLTSHISALLFNYLTVQGIENHFQKELENGDALVRKVKIVPLEVVTRNFAAGHFASRFNVPMHKALKPAVHEFYFKSDSLDDPFINNEQILALEIADKKTISQMKEEAELINQKLINLFDQIGITLIDFKVEFGFTSQGKLLLADELSPDNMRLLDKESGKSLDKDVFRQKIGDVRIGYQTVLDRLNNKLIAGEN.

The protein belongs to the SAICAR synthetase family.

It carries out the reaction 5-amino-1-(5-phospho-D-ribosyl)imidazole-4-carboxylate + L-aspartate + ATP = (2S)-2-[5-amino-1-(5-phospho-beta-D-ribosyl)imidazole-4-carboxamido]succinate + ADP + phosphate + 2 H(+). It functions in the pathway purine metabolism; IMP biosynthesis via de novo pathway; 5-amino-1-(5-phospho-D-ribosyl)imidazole-4-carboxamide from 5-amino-1-(5-phospho-D-ribosyl)imidazole-4-carboxylate: step 1/2. The protein is Phosphoribosylaminoimidazole-succinocarboxamide synthase of Oenococcus oeni (strain ATCC BAA-331 / PSU-1).